The sequence spans 183 residues: Threonylcarbamoyl-AMP synthase (183 aa).

Residues 1–183 (MNREQIAEAL…LRTNQLFRQG (183 aa)) enclose the YrdC-like domain.

It belongs to the SUA5 family. TsaC subfamily.

The protein resides in the cytoplasm. The enzyme catalyses L-threonine + hydrogencarbonate + ATP = L-threonylcarbamoyladenylate + diphosphate + H2O. Functionally, required for the formation of a threonylcarbamoyl group on adenosine at position 37 (t(6)A37) in tRNAs that read codons beginning with adenine. Catalyzes the conversion of L-threonine, HCO(3)(-)/CO(2) and ATP to give threonylcarbamoyl-AMP (TC-AMP) as the acyladenylate intermediate, with the release of diphosphate. The sequence is that of Threonylcarbamoyl-AMP synthase from Haemophilus influenzae (strain 86-028NP).